The chain runs to 1020 residues: Probable leucine-rich repeat receptor-like serine/threonine-protein kinase At3g14840 (1020 aa).

An N-terminal signal peptide occupies residues 1-26; the sequence is MSLNRQLLFTYYFIVSLILFSDFVSS. The Extracellular segment spans residues 27 to 614; sequence ATLPKEEVDA…GTGGGSSVGT (588 aa). N-linked (GlcNAc...) asparagine glycosylation is found at Asn-50 and Asn-81. LRR repeat units follow at residues 86 to 110, 111 to 134, 136 to 157, 158 to 181, 182 to 204, 206 to 231, 253 to 276, 277 to 301, 302 to 324, and 326 to 349; these read ICHV…LSGL, PFLQ…WGAS, LLNI…LGNL, TTLS…LGNL, PNLK…TFAK, TTLT…NWKG, LGTL…PLRN, MTSM…LGQN, RKLK…TYSG, and SDVD…MVDQ. N-linked (GlcNAc...) asparagine glycosylation is found at Asn-124, Asn-138, and Asn-156. Asn-193 carries an N-linked (GlcNAc...) asparagine glycan. N-linked (GlcNAc...) asparagine glycans are attached at residues Asn-276 and Asn-289. Residues Asn-359, Asn-386, Asn-389, Asn-417, Asn-461, Asn-469, and Asn-498 are each glycosylated (N-linked (GlcNAc...) asparagine). The LRR 11 repeat unit spans residues 479-501; that stretch reads QARLSAISLTYQALCLGKGNYTV. The helical transmembrane segment at 615-635 threads the bilayer; sequence VVGSVIASTVFLVLLIGGILW. Over 636–1020 the chain is Cytoplasmic; that stretch reads WRGCLRPKSQ…LDSAYWNTRT (385 aa). The region spanning 672 to 949 is the Protein kinase domain; sequence FDPANKIGEG…VSMLEGHSTV (278 aa). ATP contacts are provided by residues 678–686 and Lys-700; that span reads IGEGGFGPV. Phosphotyrosine is present on Tyr-745. Asp-798 acts as the Proton acceptor in catalysis. Ser-831 is modified (phosphoserine). A phosphothreonine mark is found at Thr-832 and Thr-837. Tyr-845 is modified (phosphotyrosine).

Belongs to the protein kinase superfamily. Ser/Thr protein kinase family.

Its subcellular location is the cell membrane. It catalyses the reaction L-seryl-[protein] + ATP = O-phospho-L-seryl-[protein] + ADP + H(+). The catalysed reaction is L-threonyl-[protein] + ATP = O-phospho-L-threonyl-[protein] + ADP + H(+). The polypeptide is Probable leucine-rich repeat receptor-like serine/threonine-protein kinase At3g14840 (LRR-RLK) (Arabidopsis thaliana (Mouse-ear cress)).